The primary structure comprises 476 residues: NADH-quinone oxidoreductase subunit N (476 aa).

13 helical membrane passes run Leu7 to Val27, Arg33 to Met53, Val59 to Val79, Gly100 to Gly120, Leu122 to Phe142, Tyr156 to Gly176, Leu199 to Phe219, Phe237 to Ala257, Trp265 to Ile285, Leu305 to Met325, Val363 to Phe383, Ile399 to Val419, and Val437 to Ile457.

Belongs to the complex I subunit 2 family. As to quaternary structure, NDH-1 is composed of 14 different subunits. Subunits NuoA, H, J, K, L, M, N constitute the membrane sector of the complex.

It localises to the cell membrane. The catalysed reaction is a quinone + NADH + 5 H(+)(in) = a quinol + NAD(+) + 4 H(+)(out). NDH-1 shuttles electrons from NADH, via FMN and iron-sulfur (Fe-S) centers, to quinones in the respiratory chain. The immediate electron acceptor for the enzyme in this species is believed to be a menaquinone. Couples the redox reaction to proton translocation (for every two electrons transferred, four hydrogen ions are translocated across the cytoplasmic membrane), and thus conserves the redox energy in a proton gradient. The sequence is that of NADH-quinone oxidoreductase subunit N from Moorella thermoacetica (strain ATCC 39073 / JCM 9320).